The sequence spans 243 residues: UPF0758 protein MAE_44350 (243 aa).

In terms of domain architecture, MPN spans 113–235 (VIDSPDTAAA…FQSLRQITDL (123 aa)). Residues histidine 184, histidine 186, and aspartate 197 each coordinate Zn(2+). Positions 184 to 197 (HNHPTGSLVPSQDD) match the JAMM motif motif.

Belongs to the UPF0758 family.

This Microcystis aeruginosa (strain NIES-843 / IAM M-2473) protein is UPF0758 protein MAE_44350.